A 236-amino-acid polypeptide reads, in one-letter code: Pyridoxine 5'-phosphate synthase (236 aa).

A 3-amino-2-oxopropyl phosphate-binding site is contributed by Asn6. 8–9 (DH) contacts 1-deoxy-D-xylulose 5-phosphate. Arg17 is a 3-amino-2-oxopropyl phosphate binding site. Residue His42 is the Proton acceptor of the active site. Positions 44 and 49 each coordinate 1-deoxy-D-xylulose 5-phosphate. Glu69 (proton acceptor) is an active-site residue. Thr99 is a 1-deoxy-D-xylulose 5-phosphate binding site. His192 functions as the Proton donor in the catalytic mechanism. Residues Gly193 and 216-217 (GH) each bind 3-amino-2-oxopropyl phosphate.

This sequence belongs to the PNP synthase family. As to quaternary structure, homooctamer; tetramer of dimers.

The protein resides in the cytoplasm. It catalyses the reaction 3-amino-2-oxopropyl phosphate + 1-deoxy-D-xylulose 5-phosphate = pyridoxine 5'-phosphate + phosphate + 2 H2O + H(+). It functions in the pathway cofactor biosynthesis; pyridoxine 5'-phosphate biosynthesis; pyridoxine 5'-phosphate from D-erythrose 4-phosphate: step 5/5. Catalyzes the complicated ring closure reaction between the two acyclic compounds 1-deoxy-D-xylulose-5-phosphate (DXP) and 3-amino-2-oxopropyl phosphate (1-amino-acetone-3-phosphate or AAP) to form pyridoxine 5'-phosphate (PNP) and inorganic phosphate. The chain is Pyridoxine 5'-phosphate synthase from Aquifex pyrophilus.